The chain runs to 499 residues: Endosomal/lysosomal proton channel TMEM175 (499 aa).

A compositionally biased stretch (polar residues) spans 1–10 (MSRLQVQEQA). The interval 1–26 (MSRLQVQEQAVDSEGDSSLYRRDEEG) is disordered. Residues 1 to 30 (MSRLQVQEQAVDSEGDSSLYRRDEEGTQSS) are Cytoplasmic-facing. The chain crosses the membrane as a helical span at residues 31–53 (HRMLGFSDALLSIIATVMILPVT). Positions 32 to 38 (RMLGFSD) match the RxxxFSD motif 1 motif. The Lumenal segment spans residues 54 to 74 (HTEISPEQQFDKSIQKLLATR). Residues 55 to 60 (TEISPE) form a short helix H1-1 region. The interval 62–68 (QFDKSIQ) is short helix H2-1. The chain crosses the membrane as a helical span at residues 75–97 (IAVYLMTFLIVTVAWAAHTRLFQ). The Cytoplasmic portion of the chain corresponds to 98-103 (VVGKID). The helical transmembrane segment at 104–125 (DTLALLNLACMMTITLLPYTFS) threads the bilayer. The Lumenal portion of the chain corresponds to 126–135 (LMVTFPDVPL). The chain crosses the membrane as a helical span at residues 136–157 (GIFLFCMCVIAIGSVQAMIVGY). At 158 to 181 (AFHFPHLLNPQIQCSTHRALSRRH) the chain is on the cytoplasmic side. The helical transmembrane segment at 182 to 202 (ILHLVLRGPALCFVAAVFSLF) threads the bilayer. The Lumenal portion of the chain corresponds to 203–207 (FFPLS). A helical membrane pass occupies residues 208 to 227 (YLLMVTVIFLPHISKATTWC). Over 228–254 (KDKFMGHRESPAHNVEPFSIDLHAPLS) the chain is Cytoplasmic. Residues 255–279 (KERVEAFSDGVYAIVATLLILDICE) traverse the membrane as a helical segment. Positions 257–263 (RVEAFSD) match the RxxxFSD motif 2 motif. Over 280-306 (DNVPDPKDVQQKFSGSLVAALGAYGPQ) the chain is Lumenal. The interval 285-293 (PKDVQQKFS) is short helix H1-2. The interval 295-301 (SLVAALG) is short helix H2-2. A helical membrane pass occupies residues 307–329 (FLAYFGSFATVGLLWFAHHSLFL). Residues 330–335 (HVRKAT) lie on the Cytoplasmic side of the membrane. A helical membrane pass occupies residues 336 to 357 (QTMGLFNILSLAFVGGLPLAYQ). Topologically, residues 358–372 (QTSAFARQPRDELER) are lumenal. Residues 373–393 (VRVSCAIIFFASIFQFAIWTT) form a helical membrane-spanning segment. Residues 394–413 (ALLHQRETLQPAVQFGGQEH) are Cytoplasmic-facing. A helical transmembrane segment spans residues 414–437 (AFMFAKLALYPCASLLAFAATCLL). The Lumenal portion of the chain corresponds to 438–439 (SR). A helical transmembrane segment spans residues 440–466 (FSTAIFHLMQIAVPFAFLLLRLLVRLA). Over 467–499 (LAGLQVLWDLWPERPQQDQGEPETQSQLLPASC) the chain is Cytoplasmic.

Belongs to the TMEM175 family. Homodimer. Interacts with AKT (AKT1, AKT2 or AKT3); leading to formation of the lysoK(GF) complex, which activates the channel. Interacts with LAMP1; inhibiting the proton channel activity of TMEM175. Interacts with LAMP2; inhibiting the proton channel activity of TMEM175.

It localises to the endosome membrane. Its subcellular location is the lysosome membrane. It catalyses the reaction H(+)(in) = H(+)(out). The enzyme catalyses K(+)(in) = K(+)(out). With respect to regulation, active at low pH (under pH 4.6): proton channel activity is activated by luminal side protons. Polyunsaturated fatty acids, such as arachidonic acid, also activate the channel activity. Proton channel activity is directly inhibited by LAMP1 or LAMP2, facilitating lysosomal acidification. Channel activity is activated following interaction with AKT (AKT1, AKT2 or AKT3): interaction promotes activation from closed to an open state. Activation by AKT is independent of AKT serine/threonine-protein kinase activity. Its function is as follows. Proton-activated proton channel that catalyzes proton efflux from endosomes and lysosomes to maintain a steady-state pH. Activated at low pH (under pH 4.6) by luminal side protons: selectively mediates lysosomal proton release from lysosomes, eliciting a proton leak that balances V-ATPase activity to maintain pH homeostasis. Regulation of lumenal pH stability is required for autophagosome-lysosome fusion. Also acts as a potassium channel at higher pH, regulating potassium conductance in endosomes and lysosomes. Constitutes the pore-forming subunit of the lysoK(GF) complex, a complex activated by extracellular growth factors. The lysoK(GF) complex is composed of TMEM175 and AKT (AKT1, AKT2 or AKT3), a major target of growth factor receptors: in the complex, TMEM175 channel is opened by conformational changes by AKT, leading to its activation. The lysoK(GF) complex is required to protect neurons against stress-induced damage. This is Endosomal/lysosomal proton channel TMEM175 from Rattus norvegicus (Rat).